We begin with the raw amino-acid sequence, 212 residues long: Protein Rv0786c (212 aa).

This Mycobacterium tuberculosis (strain ATCC 25618 / H37Rv) protein is Protein Rv0786c.